We begin with the raw amino-acid sequence, 741 residues long: Mitofusin-1 (741 aa).

Residues 1 to 584 are Cytoplasmic-facing; sequence MAEPVSPLKH…ASQEELMITL (584 aa). A part of a helix bundle domain, formed by helices from N-terminal and C-terminal regions region spans residues 9 to 73; it reads KHFVLAKKAI…LSIIGEVLSR (65 aa). One can recognise a Dynamin-type G domain in the interval 72–321; the sequence is SRRHMKVAFF…ARLQEFQNFE (250 aa). The tract at residues 82-89 is G1 motif; it reads GRTSSGKS. 85-90 serves as a coordination point for GTP; that stretch reads SSGKSS. The G2 motif stretch occupies residues 108-109; that stretch reads IT. Positions 178–181 are G3 motif; the sequence is DSPG. Residue 237 to 240 coordinates GTP; it reads NRWD. Residues 237–240 form a G4 motif region; the sequence is NRWD. A region of interest (G5 motif) is located at residue Glu266. Residues Ser284 and Lys286 each contribute to the GTP site. Residues 338–364 form a part of a helix bundle domain, formed by helices from N-terminal and C-terminal regions region; the sequence is EQHTIRAKQILATVKNIMDSVNLAAED. Positions 371–408 form a coiled coil; it reads EEREDQIDRLDFIRNQMNLLTLDVKKKIKEVTEEVANK. Residues 585-605 form a helical membrane-spanning segment; sequence VTGLASVTSRTSMGIIIVGGV. Residues 606–608 are Mitochondrial intermembrane-facing; it reads IWK. The chain crosses the membrane as a helical span at residues 609–629; that stretch reads TIGWKLLSVSLTMYGALYLYE. At 630-741 the chain is on the cytoplasmic side; sequence RLSWTTHAKE…QFLPSSNEES (112 aa). A coiled-coil region spans residues 679 to 734; it reads RLCQQVDITQKQLEEEIARLPKEIDQLEKIQNNSKLLRNKAVQLENELENFTKQFL. The interval 703–734 is part of a helix bundle domain, formed by helices from N-terminal and C-terminal regions; that stretch reads DQLEKIQNNSKLLRNKAVQLENELENFTKQFL.

The protein belongs to the TRAFAC class dynamin-like GTPase superfamily. Dynamin/Fzo/YdjA family. Mitofusin subfamily. As to quaternary structure, homodimer, also in the absence of bound GTP. Forms higher oligomers in the presence of a transition state GTP analog. Forms homomultimers and heteromultimers with MFN2. Oligomerization is essential for mitochondrion fusion. Component of a high molecular weight multiprotein complex. Interacts with VAT1. Interacts with THG1L; THG1L probably functions as a guanyl-nucleotide exchange factor/GEF, activating MFN1. Ubiquitinated by non-degradative ubiquitin by PRKN. Deubiquitination by USP30 inhibits mitochondrial fusion. Ubiquitinated by MARCHF5. When mitochondria are depolarized and dysfunctional, it is ubiquitinated by a SCF (SKP1-CUL1-F-box protein) E3 ubiquitin-protein ligase complex that contains FBXO7 and PRKN. In terms of tissue distribution, detected in kidney and heart (at protein level). Ubiquitous. Expressed at slightly higher level in kidney and heart. Isoform 2 may be overexpressed in some tumors, such as lung cancers.

It is found in the mitochondrion outer membrane. It localises to the cytoplasm. It catalyses the reaction GTP + H2O = GDP + phosphate + H(+). Mitochondrial outer membrane GTPase that mediates mitochondrial clustering and fusion. Membrane clustering requires GTPase activity. It may involve a major rearrangement of the coiled coil domains. Mitochondria are highly dynamic organelles, and their morphology is determined by the equilibrium between mitochondrial fusion and fission events. Overexpression induces the formation of mitochondrial networks (in vitro). Has low GTPase activity. This is Mitofusin-1 (MFN1) from Homo sapiens (Human).